The following is a 130-amino-acid chain: MAYLRTGAEFIASYRSSLNRMSDLQQKIKMFGFNNAYYNQVGLLKHDWLPHSPVWLEALRRLPRELQEARDFRIARASLLYASKHVLPKEQWTTIEDDIPYLEPYVNVVVKEMSDRSNWDNFVNPEIYSE.

Belongs to the UQCRB/QCR7 family. As to quaternary structure, component of the ubiquinol-cytochrome c oxidoreductase (cytochrome b-c1 complex, complex III, CIII), a multisubunit enzyme composed of 3 respiratory subunits cytochrome b, cytochrome c1 and Rieske protein, 2 core protein subunits, and additional low-molecular weight protein subunits. The complex exists as an obligatory dimer and forms supercomplexes (SCs) in the inner mitochondrial membrane with cytochrome c oxidase (complex IV, CIV).

The protein resides in the mitochondrion inner membrane. In terms of biological role, component of the ubiquinol-cytochrome c oxidoreductase, a multisubunit transmembrane complex that is part of the mitochondrial electron transport chain which drives oxidative phosphorylation. The respiratory chain contains 3 multisubunit complexes succinate dehydrogenase (complex II, CII), ubiquinol-cytochrome c oxidoreductase (cytochrome b-c1 complex, complex III, CIII) and cytochrome c oxidase (complex IV, CIV), that cooperate to transfer electrons derived from NADH and succinate to molecular oxygen, creating an electrochemical gradient over the inner membrane that drives transmembrane transport and the ATP synthase. The cytochrome b-c1 complex catalyzes electron transfer from ubiquinol to cytochrome c, linking this redox reaction to translocation of protons across the mitochondrial inner membrane, with protons being carried across the membrane as hydrogens on the quinol. In the process called Q cycle, 2 protons are consumed from the matrix, 4 protons are released into the intermembrane space and 2 electrons are passed to cytochrome c. The protein is Cytochrome b-c1 complex subunit 7 of Schistosoma mansoni (Blood fluke).